Consider the following 101-residue polypeptide: Small ribosomal subunit protein uS14 (101 aa).

A disordered region spans residues G36–G72. The span at R61–P70 shows a compositional bias: basic and acidic residues.

The protein belongs to the universal ribosomal protein uS14 family. As to quaternary structure, part of the 30S ribosomal subunit. Contacts proteins S3 and S10.

In terms of biological role, binds 16S rRNA, required for the assembly of 30S particles and may also be responsible for determining the conformation of the 16S rRNA at the A site. This chain is Small ribosomal subunit protein uS14, found in Clavibacter michiganensis subsp. michiganensis (strain NCPPB 382).